A 175-amino-acid polypeptide reads, in one-letter code: Shikimate kinase (175 aa).

ATP is bound at residue 14-19 (GAGKST). S18 serves as a coordination point for Mg(2+). D36, R60, and G82 together coordinate substrate. An ATP-binding site is contributed by R120. Residue R140 participates in substrate binding. Q157 lines the ATP pocket.

This sequence belongs to the shikimate kinase family. Monomer. Mg(2+) serves as cofactor.

It localises to the cytoplasm. The enzyme catalyses shikimate + ATP = 3-phosphoshikimate + ADP + H(+). The protein operates within metabolic intermediate biosynthesis; chorismate biosynthesis; chorismate from D-erythrose 4-phosphate and phosphoenolpyruvate: step 5/7. In terms of biological role, catalyzes the specific phosphorylation of the 3-hydroxyl group of shikimic acid using ATP as a cosubstrate. The polypeptide is Shikimate kinase (Pasteurella multocida (strain Pm70)).